Consider the following 500-residue polypeptide: MEVASLYRRVLPSPPAVEFASAEGKRLFAEALQGGTMEGFFNLISYFQTQSEPAFCGLASLSVVLNALAIDPGRPWKGPWRWFDESMLDCCEPLHKVKAEGITFGKVVCLAHCAGARVQSFRADQTTIHDFRAHLTRCASSQDCHLISSYHRSPFKQTGTGHFSPIGGYHAEKDMALILDVARFKYPPHWVPLTLLWDAMNTTDEATGLLRGFMLVSRRSSAPSLLYTVSCGHGSWKSMAKYCVEDVPNLLKDESLDNVTTLLSRLVESLPANAGDLIKCVIEVRRKEEGESSLSKEEKERLFLKEKVLQQIRDTDLFRVVHELQYPKGLCGSCSSSSDEDSLAEIAATVCCQGAAFLSGNLVSRDGFCCRETCIKCIEANGDGLKTVISGTVVSKGNEQAVDLLLPTSSSKTSLCNSNLKSKIVKYPSSTDVLTVLLLVLQPNTWLGIKDENVKAEFQSLVSTDNLPDLLKQEILHLRRQLHYLAGCKGQEACQEPPSP.

One can recognise a Peptidase C83 domain in the interval 1-221; sequence MEVASLYRRV…GFMLVSRRSS (221 aa). Residues Cys-56, His-162, and Asp-180 contribute to the active site.

The protein belongs to the phytochelatin synthase family. In terms of tissue distribution, expressed in roots and shoots.

The catalysed reaction is [Glu(-Cys)](n)-Gly + glutathione + H(+) = [Glu(-Cys)](n+1)-Gly + glycine. Requires cadmium for activity. In terms of biological role, involved in the synthesis of phytochelatins (PC) and homophytochelatins (hPC), the heavy-metal-binding peptides of plants. This chain is Glutathione gamma-glutamylcysteinyltransferase 1 (PCS1), found in Triticum aestivum (Wheat).